Here is a 482-residue protein sequence, read N- to C-terminus: Cilia- and flagella-associated protein 53 (482 aa).

Coiled coils occupy residues 9–40, 67–124, and 152–413; these read DARIQKMRELEERLANLKADRKVEQKMVAVAE, ADLN…QALA, and IEER…AKDA. Residues 462-482 form a disordered region; it reads VNQTLSSTDPPVWHGRRKFDW.

The protein belongs to the CFAP53 family.

The protein localises to the cell projection. It is found in the cilium. Its subcellular location is the flagellum. In terms of biological role, may play a role in filopodium movement. In Chlamydomonas reinhardtii (Chlamydomonas smithii), this protein is Cilia- and flagella-associated protein 53.